A 487-amino-acid polypeptide reads, in one-letter code: Phosphatidylserine synthase 2 (487 aa).

Positions 1–10 are enriched in basic and acidic residues; the sequence is MRRGERRDAG. Residues 1–50 form a disordered region; it reads MRRGERRDAGGPRPESPVPAGRASLEEPPDGPSAGQATGPGEGRRSTESE. At 1 to 62 the chain is on the cytoplasmic side; the sequence is MRRGERRDAG…DDGTNTFFWR (62 aa). Phosphoserine is present on residues S16 and S24. Residues 63–83 traverse the membrane as a helical segment; it reads AHTLTVLFILTCTLGYVTLLE. Residues 84–96 lie on the Lumenal side of the membrane; the sequence is ETPQDTAYNTKRG. A helical transmembrane segment spans residues 97–117; that stretch reads IVASILVFLCFGVTQAKDGPF. The Cytoplasmic segment spans residues 118–126; the sequence is SRPHPAYWR. Residues 127-147 form a helical membrane-spanning segment; sequence FWLCVSVVYELFLIFILFQTV. Residues 148–313 are Lumenal-facing; the sequence is QDGRQFLKYV…EWKPASSLRR (166 aa). N181 carries N-linked (GlcNAc...) asparagine glycosylation. The chain crosses the membrane as a helical span at residues 314–334; it reads WLAVCGIILVFLLAELNTFYL. A topological domain (cytoplasmic) is located at residue K335. A helical transmembrane segment spans residues 336-356; sequence FVLWMPPEHYLVLLRLVFFVN. Topologically, residues 357-376 are lumenal; the sequence is VGGVAMREIYDFMDDPKPHK. Residues 377-397 form a helical membrane-spanning segment; that stretch reads KLGPQAWLVAAITATELLIVV. Over 398–403 the chain is Cytoplasmic; sequence KYDPHT. The helical transmembrane segment at 404 to 424 threads the bilayer; that stretch reads LTLSLPFYISQCWTLGSVLAL. Residues 425 to 487 lie on the Lumenal side of the membrane; the sequence is TWTVWRFFLR…AEGEGAPTPN (63 aa). Positions 451–487 are disordered; that stretch reads KDDQGSTVGNGDQHPLGLDEDLLGPGVAEGEGAPTPN. Phosphothreonine is present on T485.

This sequence belongs to the phosphatidyl serine synthase family.

The protein localises to the endoplasmic reticulum membrane. It carries out the reaction a 1,2-diacyl-sn-glycero-3-phosphoethanolamine + L-serine = a 1,2-diacyl-sn-glycero-3-phospho-L-serine + ethanolamine. The enzyme catalyses 1-hexadecanoyl-2-(9Z-octadecenoyl)-sn-glycero-3-phosphoethanolamine + L-serine = 1-hexadecanoyl-2-(9Z-octadecenoyl)-sn-glycero-3-phospho-L-serine + ethanolamine. The catalysed reaction is 1-hexadecanoyl-2-(4Z,7Z,10Z,13Z,16Z,19Z-docosahexaenoyl)-sn-glycero-3-phosphoethanolamine + L-serine = 1-hexadecanoyl-2-(4Z,7Z,10Z,13Z,16Z,19Z-docosahexaenoyl)-sn-glycero-3-phosphoserine + ethanolamine. It catalyses the reaction 1-octadecanoyl-2-(5Z,8Z,11Z,14Z)-eicosatetraenoyl-sn-glycero-3-phosphoethanolamine + L-serine = 1-octadecanoyl-2-(5Z,8Z,11Z,14Z)-eicosatetraenoyl-sn-glycero-3-phosphoserine + ethanolamine. It carries out the reaction 1-octadecanoyl-2-(4Z,7Z,10Z,13Z,16Z,19Z-docosahexaenoyl)-sn-glycero-3-phosphoethanolamine + L-serine = 1-octadecanoyl-2-(4Z,7Z,10Z,13Z,16Z,19Z-docosahexaenoyl)-sn-glycero-3-phosphoserine + ethanolamine. The enzyme catalyses 1-(1Z-octadecenyl)-2-(4Z,7Z,10Z,13Z,16Z,19Z-docosahexaenoyl)-sn-glycero-3-phosphoethanolamine + L-serine = 1-(1Z-octadecenyl)-2-(4Z,7Z,10Z,13Z,16Z,19Z-docosahexaenoyl)-sn-glycero-3-phospho-L-serine + ethanolamine. The catalysed reaction is 1-octadecanoyl-2-(9Z-octadecenoyl)-sn-glycero-3-phosphoethanolamine + L-serine = 1-octadecanoyl-2-(9Z-octadecenoyl)-sn-glycero-3-phospho-L-serine + ethanolamine. It catalyses the reaction 1-(1Z-octadecenyl)-2-(9Z-octadecenoyl)-sn-glycero-3-phosphoethanolamine + L-serine = 1-(1Z-octadecenyl)-2-(9Z-octadecenoyl)-sn-glycero-3-phospho-L-serine + ethanolamine. It carries out the reaction 1-(1Z-octadecenyl)-2-(5Z,8Z,11Z,14Z- eicosatetraenoyl)-sn-glycero-3-phosphoethanolamine + L-serine = 1-(1Z-octadecenyl)-2-(5Z,8Z,11Z,14Z-eicosatetraenoyl)-sn-glycero-3-phospho-L-serine + ethanolamine. Its pathway is phospholipid metabolism; phosphatidylserine biosynthesis. Requires calcium ions. Inhibited by exogenous phosphatidylserine. In terms of biological role, catalyzes a base-exchange reaction in which the polar head group of phosphatidylethanolamine (PE) or phosphatidylcholine (PC) is replaced by L-serine. Catalyzes the conversion of phosphatatidylethanolamine and does not act on phosphatidylcholine. Can utilize both phosphatidylethanolamine (PE) plasmalogen and diacyl PE as substrate and the latter is six times better utilized, indicating the importance of an ester linkage at the sn-1 position. Although it shows no sn-1 fatty acyl preference, exhibits significant preference towards docosahexaenoic acid (22:6n-3) compared with 18:1 or 20:4 at the sn-2 position. This is Phosphatidylserine synthase 2 (PTDSS2) from Homo sapiens (Human).